The sequence spans 310 residues: MKTVLILLSILGMACALSMKNLNRRAKLEDSEENGVFKYRPQYYVYKHGYFYPALKRFAVQSSSDSSEENGNGDSSEEEEEEEETSNEEGNNGGNEDSDENEDEESEAENTTLSTTTLGYGEITPGTGDIGLAAIWLPRKAGATGKKATKEDESDEEEEEEEEEENEAEVDDNEQGINGTSSNSTEVDNGHGSSGGDNGEEDGEEESVTEANTEGITVAGETTTSPNGGFKPTTPHQEVYGTTPPPFGKITTPGEYEQTGTNEYDNGYEIYESENGDPRGDNYRAYEDEYSYYKGRGYDSYDGQDYYSHQ.

The signal sequence occupies residues 1–16 (MKTVLILLSILGMACA). A phosphoserine mark is found at serine 31, serine 62, serine 67, serine 75, serine 76, serine 98, and serine 106. The disordered stretch occupies residues 61-284 (QSSSDSSEEN…NGDPRGDNYR (224 aa)). The segment covering 62–74 (SSSDSSEENGNGD) has biased composition (low complexity). Composition is skewed to acidic residues over residues 75–87 (SSEE…ETSN) and 96–108 (EDSD…ESEA). Asparagine 110 carries an N-linked (GlcNAc...) asparagine glycan. Threonine 144 carries the post-translational modification Phosphothreonine. Over residues 152 to 174 (DESDEEEEEEEEEENEAEVDDNE) the composition is skewed to acidic residues. Serine 154 carries the post-translational modification Phosphoserine. The segment covering 175–187 (QGINGTSSNSTEV) has biased composition (polar residues). Residues asparagine 178 and asparagine 183 are each glycosylated (N-linked (GlcNAc...) asparagine). The span at 198-208 (NGEEDGEEESV) shows a compositional bias: acidic residues. The segment covering 209–227 (TEANTEGITVAGETTTSPN) has biased composition (polar residues). Phosphoserine is present on serine 273. Residues 279-281 (RGD) carry the Integrin-binding motif motif. Serine 300 is modified (phosphoserine). Sulfotyrosine is present on residues tyrosine 306 and tyrosine 307.

As to quaternary structure, monomer. Interacts with integrins; the interaction promotes cell adhesion.

It localises to the secreted. In terms of biological role, binds tightly to hydroxyapatite. Appears to form an integral part of the mineralized matrix. Probably important to cell-matrix interaction. Promotes adhesion and migration of various cells via the alpha-V/beta-3 integrin receptor (ITGAV:ITGB3). This is Integrin-binding sialoprotein (IBSP) from Bos taurus (Bovine).